A 360-amino-acid chain; its full sequence is sn-glycerol-3-phosphate import ATP-binding protein UgpC (360 aa).

The ABC transporter domain maps to 4 to 235; that stretch reads LSLKGVKKSY…PATTFVASFI (232 aa). 37–44 contributes to the ATP binding site; sequence GPSGCGKS.

It belongs to the ABC transporter superfamily. sn-glycerol-3-phosphate importer (TC 3.A.1.1.3) family. As to quaternary structure, the complex is composed of two ATP-binding proteins (UgpC), two transmembrane proteins (UgpA and UgpE) and a solute-binding protein (UgpB).

Its subcellular location is the cell inner membrane. It catalyses the reaction sn-glycerol 3-phosphate(out) + ATP + H2O = sn-glycerol 3-phosphate(in) + ADP + phosphate + H(+). Part of the ABC transporter complex UgpBAEC involved in sn-glycerol-3-phosphate (G3P) import. Responsible for energy coupling to the transport system. This Burkholderia mallei (strain ATCC 23344) protein is sn-glycerol-3-phosphate import ATP-binding protein UgpC.